The following is a 317-amino-acid chain: Transaldolase (317 aa).

Lys126 functions as the Schiff-base intermediate with substrate in the catalytic mechanism.

It belongs to the transaldolase family. Type 1 subfamily. In terms of assembly, homodimer.

Its subcellular location is the cytoplasm. The enzyme catalyses D-sedoheptulose 7-phosphate + D-glyceraldehyde 3-phosphate = D-erythrose 4-phosphate + beta-D-fructose 6-phosphate. It participates in carbohydrate degradation; pentose phosphate pathway; D-glyceraldehyde 3-phosphate and beta-D-fructose 6-phosphate from D-ribose 5-phosphate and D-xylulose 5-phosphate (non-oxidative stage): step 2/3. Its function is as follows. Transaldolase is important for the balance of metabolites in the pentose-phosphate pathway. The sequence is that of Transaldolase from Burkholderia lata (strain ATCC 17760 / DSM 23089 / LMG 22485 / NCIMB 9086 / R18194 / 383).